The chain runs to 209 residues: Transmembrane 4 L6 family member 19 (209 aa).

Over 1–16 the chain is Cytoplasmic; that stretch reads MVSSPCTQASSRTCSR. Residues 17-37 traverse the membrane as a helical segment; that stretch reads ILGLSLGTAALFAAGANVALL. Residues 38-59 are Extracellular-facing; it reads LPNWDVTYLLRGLLGRHAMLGT. Residues 60–80 form a helical membrane-spanning segment; sequence GLWGGGLMVLTAAILISLMGW. The Cytoplasmic segment spans residues 81-93; the sequence is RYGCFSKSGLCRS. Residues 94 to 114 traverse the membrane as a helical segment; sequence VLTALLSGGLALLGALICFVT. Residues 115–175 are Extracellular-facing; that stretch reads SGVALKDGPF…PSAAVVWHVS (61 aa). The N-linked (GlcNAc...) asparagine glycan is linked to asparagine 133. The chain crosses the membrane as a helical span at residues 176–196; the sequence is LFSALLCISLLQLLLVVVHVI. An important for homodimerization region spans residues 186–196; that stretch reads LQLLLVVVHVI. The Cytoplasmic portion of the chain corresponds to 197–209; sequence NSLLGLFCSLCEK.

It belongs to the L6 tetraspanin family. May form homodimers and homooligomers. Interacts with integrins ITGAV and ITGB3. Interacts with components of members of the V0 complex of vacuolar(H+)-ATPase (V-ATPase), including ATP6V0B and ATP6V0D2; this interaction inhibits V1-V0 complex assembly. As to expression, in adipose tissue, expressed by macrophages.

It localises to the lysosome membrane. It is found in the cytoplasm. The protein localises to the cytoskeleton. The protein resides in the cell projection. Its subcellular location is the filopodium. Negatively regulates vacuolar (H+)-ATPase (V-ATPase) activity by interacting with members of V-ATPase V0 complex and hence inhibiting V1-V0 complex assembly. Required for multinucleation during osteoclast differentiation. In Homo sapiens (Human), this protein is Transmembrane 4 L6 family member 19 (TM4SF19).